The chain runs to 803 residues: MVVVGGVNTNYRHYALVIVLFFFLNVYLLYSAQNSVQIRKDEGETREKFQTPKVPLVDPISTCEIVDELAKSAISRATSPGCKSKLQLEACQLKNGTFSESFPQSTCSNHQDALIDQRIGCFLDKKDARVLKEFEYKFPQSNSKSTCRKNCYKAGFLYYGLEFGLECFCGNDVANATEIDSGECRNYKCPGAEDEFCGGFNAVEIFRTDKLVMLKPKYLPPAENVSKPPIKILFLLQLNGRNERQVKRFLKSIYLPNHYYYIHVDKRQNYMYSEMAKIAEKVPNIHITSTRYSTIWGGASLLQMFQQVIRDSMEIEMFKDWDYIFNFSESDFPILPIQDFERLITEHQGKSFLASHGYNTGKFIQKQGFEFVFSECDQRMFRIGKREFPENLRIDGGSDWVGIHRDLAEYSISNEELPQKLRKTFESILLPLESFYHTLAFNSKFCDDLMMSNLRLTNWLRKQGCRCASLKQIVDWCGCSPLVFREDTKIKFEMQKAISKPTYFARKFDSMVDIEAIESAEQQSMSTSKIQMDHPTYHFAYANIFKFGIDEEKIAHRSLASFALNTIKSHEKMAKIVQIDALRAHHNAQIEIVMKVETQSGANFEFLIHRKSHVNLSTSGALEVDGYVLKDVVYGTKFEWKEEICREYMGFVTEKDTLHTRLEWSPTERVKKNDKTSPEIEFQYRNGPEKIDKSIVKPYDSVFGGQFDSWDVGKRLSNLSTCPDFFVDVFSPSSSESPLATLRFSVYTEQNVDCHVAYLRDFFEIVDFCTSETACGEKIWSMSYPDPKSDIQVGWDEEARILR.

The Cytoplasmic segment spans residues Val3–His13. The chain crosses the membrane as a helical; Signal-anchor for type II membrane protein span at residues Tyr14–Asn34. Residues Ser35–Arg803 lie on the Lumenal side of the membrane. Cys63 and Cys91 are joined by a disulfide. N-linked (GlcNAc...) asparagine glycosylation is found at Asn95, Asn175, and Asn224. Cystine bridges form between Cys107/Cys446, Cys465/Cys479, and Cys467/Cys477. A WSC domain is found at Ile115–Asp209. Residues Asp265 and Thr294 to Trp296 each bind UDP-alpha-D-xylose. Asn326 carries N-linked (GlcNAc...) asparagine glycosylation. Asp399–Trp400 contacts UDP-alpha-D-xylose. UDP-alpha-D-xylose-binding positions include Ser480 and Arg506–Lys507. Residues Asn615 and Asn718 are each glycosylated (N-linked (GlcNAc...) asparagine). Cys769 and Cys775 are oxidised to a cystine.

This sequence belongs to the glycosyltransferase 14 family. XylT subfamily. It depends on a divalent metal cation as a cofactor.

The protein localises to the endoplasmic reticulum membrane. It is found in the golgi apparatus membrane. The enzyme catalyses UDP-alpha-D-xylose + L-seryl-[protein] = 3-O-(beta-D-xylosyl)-L-seryl-[protein] + UDP + H(+). It functions in the pathway glycan metabolism; chondroitin sulfate biosynthesis. Its pathway is glycan metabolism; heparan sulfate biosynthesis. In terms of biological role, catalyzes the first step in biosynthesis of glycosaminoglycan. Transfers D-xylose from UDP-D-xylose to specific serine residues of the core protein. In Caenorhabditis briggsae, this protein is Xylosyltransferase sqv-6.